The sequence spans 420 residues: Dual-specificity RNA methyltransferase RlmN (420 aa).

Glu-115 serves as the catalytic Proton acceptor. One can recognise a Radical SAM core domain in the interval 121–388 (DADRGTLCVS…APIRTPRGRD (268 aa)). Cys-128 and Cys-393 are oxidised to a cystine. [4Fe-4S] cluster is bound by residues Cys-135, Cys-139, and Cys-142. S-adenosyl-L-methionine-binding positions include 217–218 (GE), Ser-249, 271–273 (SLH), and Asn-350. Cys-393 functions as the S-methylcysteine intermediate in the catalytic mechanism.

Belongs to the radical SAM superfamily. RlmN family. [4Fe-4S] cluster is required as a cofactor.

It localises to the cytoplasm. It carries out the reaction adenosine(2503) in 23S rRNA + 2 reduced [2Fe-2S]-[ferredoxin] + 2 S-adenosyl-L-methionine = 2-methyladenosine(2503) in 23S rRNA + 5'-deoxyadenosine + L-methionine + 2 oxidized [2Fe-2S]-[ferredoxin] + S-adenosyl-L-homocysteine. The catalysed reaction is adenosine(37) in tRNA + 2 reduced [2Fe-2S]-[ferredoxin] + 2 S-adenosyl-L-methionine = 2-methyladenosine(37) in tRNA + 5'-deoxyadenosine + L-methionine + 2 oxidized [2Fe-2S]-[ferredoxin] + S-adenosyl-L-homocysteine. Its function is as follows. Specifically methylates position 2 of adenine 2503 in 23S rRNA and position 2 of adenine 37 in tRNAs. m2A2503 modification seems to play a crucial role in the proofreading step occurring at the peptidyl transferase center and thus would serve to optimize ribosomal fidelity. The sequence is that of Dual-specificity RNA methyltransferase RlmN from Sphingopyxis alaskensis (strain DSM 13593 / LMG 18877 / RB2256) (Sphingomonas alaskensis).